The following is a 226-amino-acid chain: UPF0758 protein GTNG_2548 (226 aa).

The MPN domain occupies 104 to 226 (VIRCPEDGAK…FISLKEKGYV (123 aa)). Residues histidine 175, histidine 177, and aspartate 188 each coordinate Zn(2+). Residues 175-188 (HNHPSGDPTPSRED) carry the JAMM motif motif.

Belongs to the UPF0758 family.

This Geobacillus thermodenitrificans (strain NG80-2) protein is UPF0758 protein GTNG_2548.